Consider the following 490-residue polypeptide: Cytochrome P450 71D11 (490 aa).

Heme is bound at residue Cys-427.

The protein belongs to the cytochrome P450 family. The cofactor is heme.

The protein is Cytochrome P450 71D11 (CYP71D11) of Lotus japonicus (Lotus corniculatus var. japonicus).